Consider the following 278-residue polypeptide: Undecaprenyl-diphosphatase 1 (278 aa).

Transmembrane regions (helical) follow at residues 45-65 (AVIG…LVYF), 95-115 (WWVI…KPLI), 119-139 (LASL…MWWA), 191-211 (VAAT…AGLY), 225-245 (PLAV…AWLL), and 256-276 (FVVY…TGVL).

Belongs to the UppP family.

Its subcellular location is the cell membrane. It catalyses the reaction di-trans,octa-cis-undecaprenyl diphosphate + H2O = di-trans,octa-cis-undecaprenyl phosphate + phosphate + H(+). In terms of biological role, catalyzes the dephosphorylation of undecaprenyl diphosphate (UPP). Confers resistance to bacitracin. The chain is Undecaprenyl-diphosphatase 1 from Streptomyces coelicolor (strain ATCC BAA-471 / A3(2) / M145).